The primary structure comprises 643 residues: MAQKMLEDQDMLDQLLSGVHDSDLDFSESEEEEEEEESSSESESDEDSDMEVEPARQEAGPPEQCQQQPQQRAREQQPPPQQQQPQQREQGPPQQQQQQRTPKRGEESGDARPRARAPSGDAGPGPSGQARLPQQQQPQQPQQPPPKPPRQEVTVRAPGDRQQPQSQAAQPIPVIGGGCAPFQLRAPIAAAAATGWGGEQAPAQPLFQHVSPLNRRGDEDRRSGRDRRRREGRERDRESRSKGRNWYRPYPRGSSGARREGGGRDAGQGQGTRNPGPSQGGCEAGPSQAQAAQAARAPRQEQGERRQMLPQGQNLGPRPQQCPPQQCPPQPCPPFPLEALPILRAKFEPSCAVSYTNLVKSIQKIAMPPFLMRRREASPPCHFSKIPQATPGLVIPAAARTGEAKFEKFTDAFVQKVIDRGMSPQDCINKTVSLRKLDAKFDPLKTFTAKTVNFGQWLDVRKDSIINSGMSTQVVFLEELCAWAKLNLQHGCNLEERDLILHTAETVCSQLMYKLKPIMSCLEPNKPYASMAKQMAYLVCGAGRIQDAGMLLREVKVGSPLTMLVAFSLCVPVMITCRNRNPSLFNYCKSFLDMYQPGLLCALFNTMTSKLNTTCTEEECYASVRAAIGSVVNTRGLLFVPGI.

Disordered regions lie at residues 1–180 (MAQK…GGCA) and 194–329 (TGWG…QCPP). Positions 24-52 (LDFSESEEEEEEEESSSESESDEDSDMEV) are enriched in acidic residues. Low complexity-rich tracts occupy residues 57-71 (QEAG…QPQQ) and 83-100 (QQPQ…QQQR). Residues 103–113 (KRGEESGDARP) show a composition bias toward basic and acidic residues. Residues 162-171 (QQPQSQAAQP) are compositionally biased toward low complexity. Residues 215–241 (RRGDEDRRSGRDRRRREGRERDRESRS) show a composition bias toward basic and acidic residues. Over residues 284-297 (AGPSQAQAAQAARA) the composition is skewed to low complexity. The segment covering 298–307 (PRQEQGERRQ) has biased composition (basic and acidic residues). Over residues 320–329 (QQCPPQQCPP) the composition is skewed to pro residues.

This sequence belongs to the herpesviridae UL69 family.

This Equus caballus (Horse) protein is Immediate-early phosphoprotein 57 (57).